We begin with the raw amino-acid sequence, 1098 residues long: Eukaryotic translation initiation factor 3 subunit A (1098 aa).

The PCI domain maps to 324–503 (AQEQATRVLL…DCVRFGSSDA (180 aa)). Residues 574–844 (TEIERIHRRK…ARQAVIDSQR (271 aa)) adopt a coiled-coil conformation. Disordered regions lie at residues 599–648 (EKAA…KIKR) and 805–1098 (RAEK…NWRR). Basic and acidic residues-rich tracts occupy residues 608–648 (QAKR…KIKR), 805–857 (RAEK…REME), and 877–895 (MPQR…EPFR). Over residues 905-914 (DSSWRSSAQP) the composition is skewed to polar residues. Composition is skewed to basic and acidic residues over residues 916–978 (RKPD…ERGA) and 1054–1079 (LPPR…RDGP). Low complexity predominate over residues 1080-1098 (NRNSGANNAGNADSANWRR).

Belongs to the eIF-3 subunit A family. Component of the eukaryotic translation initiation factor 3 (eIF-3) complex.

It localises to the cytoplasm. Its function is as follows. RNA-binding component of the eukaryotic translation initiation factor 3 (eIF-3) complex, which is involved in protein synthesis of a specialized repertoire of mRNAs and, together with other initiation factors, stimulates binding of mRNA and methionyl-tRNAi to the 40S ribosome. The eIF-3 complex specifically targets and initiates translation of a subset of mRNAs involved in cell proliferation. This is Eukaryotic translation initiation factor 3 subunit A from Caenorhabditis briggsae.